Reading from the N-terminus, the 231-residue chain is Chalcone--flavanone isomerase (231 aa).

Thr46, Asn111, and Ser188 together coordinate substrate.

Belongs to the chalcone isomerase family. Pericarp.

The enzyme catalyses a chalcone = a flavanone.. The protein operates within secondary metabolite biosynthesis; flavonoid biosynthesis. Its function is as follows. Catalyzes the intramolecular cyclization of bicyclic chalcones into tricyclic (S)-flavanones. Responsible for the isomerization of 4,2',4',6'-tetrahydroxychalcone (also termed chalcone) into naringenin. The protein is Chalcone--flavanone isomerase (CHI) of Zea mays (Maize).